The sequence spans 29 residues: Frontoxin VI (29 aa).

Cys3 and Cys24 form a disulfide bridge.

As to expression, expressed by the venom gland.

Its subcellular location is the secreted. Functionally, binds to muscle nicotinic acetylcholine receptor (nAChR) and inhibit acetylcholine from binding to the receptor, thereby impairing neuromuscular transmission. This chain is Frontoxin VI, found in Micrurus frontalis (Coral snake).